Here is a 115-residue protein sequence, read N- to C-terminus: Hydrogenase maturation factor HypA (115 aa).

His-2 provides a ligand contact to Ni(2+). Zn(2+)-binding residues include Cys-73, Cys-76, Cys-89, and Cys-92.

The protein belongs to the HypA/HybF family.

In terms of biological role, involved in the maturation of [NiFe] hydrogenases. Required for nickel insertion into the metal center of the hydrogenase. The protein is Hydrogenase maturation factor HypA of Nitrosospira multiformis (strain ATCC 25196 / NCIMB 11849 / C 71).